We begin with the raw amino-acid sequence, 522 residues long: Lysine--tRNA ligase (522 aa).

The short motif at 44-52 (PSGLPHIGT) is the 'HIGH' region element. The 'KMSKS' region motif lies at 290–294 (KISKS). An ATP-binding site is contributed by Lys-293.

Belongs to the class-I aminoacyl-tRNA synthetase family.

Its subcellular location is the cytoplasm. The enzyme catalyses tRNA(Lys) + L-lysine + ATP = L-lysyl-tRNA(Lys) + AMP + diphosphate. The sequence is that of Lysine--tRNA ligase from Rickettsia rickettsii (strain Iowa).